Consider the following 207-residue polypeptide: Probable GTP-binding protein EngB (207 aa).

The 173-residue stretch at 22-194 folds into the EngB-type G domain; sequence DLPEIAFAGR…WRRIEEVLPA (173 aa). GTP contacts are provided by residues 30–37, 57–61, 75–78, 142–145, and 173–175; these read GRSNVGKS, GRTQL, DLPG, TKCD, and FSA. Mg(2+) contacts are provided by serine 37 and threonine 59.

The protein belongs to the TRAFAC class TrmE-Era-EngA-EngB-Septin-like GTPase superfamily. EngB GTPase family. Requires Mg(2+) as cofactor.

Functionally, necessary for normal cell division and for the maintenance of normal septation. This is Probable GTP-binding protein EngB from Geotalea daltonii (strain DSM 22248 / JCM 15807 / FRC-32) (Geobacter daltonii).